We begin with the raw amino-acid sequence, 97 residues long: DNA-directed RNA polymerase subunit omega (97 aa).

Polar residues predominate over residues 1–16 (MSTPNALAAFNSSPSL). The segment at 1-21 (MSTPNALAAFNSSPSLNAPEG) is disordered.

This sequence belongs to the RNA polymerase subunit omega family. The RNAP catalytic core consists of 2 alpha, 1 beta, 1 beta' and 1 omega subunit. When a sigma factor is associated with the core the holoenzyme is formed, which can initiate transcription.

It carries out the reaction RNA(n) + a ribonucleoside 5'-triphosphate = RNA(n+1) + diphosphate. Promotes RNA polymerase assembly. Latches the N- and C-terminal regions of the beta' subunit thereby facilitating its interaction with the beta and alpha subunits. This is DNA-directed RNA polymerase subunit omega from Saccharopolyspora erythraea (strain ATCC 11635 / DSM 40517 / JCM 4748 / NBRC 13426 / NCIMB 8594 / NRRL 2338).